The chain runs to 147 residues: Fluoride-specific ion channel FluC 1 (147 aa).

4 helical membrane passes run 29-49 (YVYI…ISFL), 61-81 (IANL…IAFF), 90-110 (AITT…LELI), and 118-138 (FITL…LCYV). Na(+)-binding residues include Gly97 and Thr100.

The protein belongs to the fluoride channel Fluc/FEX (TC 1.A.43) family.

The protein resides in the cell membrane. The catalysed reaction is fluoride(in) = fluoride(out). Its activity is regulated as follows. Na(+) is not transported, but it plays an essential structural role and its presence is essential for fluoride channel function. Its function is as follows. Fluoride-specific ion channel. Important for reducing fluoride concentration in the cell, thus reducing its toxicity. This is Fluoride-specific ion channel FluC 1 from Staphylococcus aureus (strain Mu50 / ATCC 700699).